The primary structure comprises 507 residues: Histidine ammonia-lyase (507 aa).

Positions 141 to 143 (ASG) form a cross-link, 5-imidazolinone (Ala-Gly). A 2,3-didehydroalanine (Ser) modification is found at serine 142.

The protein belongs to the PAL/histidase family. Contains an active site 4-methylidene-imidazol-5-one (MIO), which is formed autocatalytically by cyclization and dehydration of residues Ala-Ser-Gly.

The protein resides in the cytoplasm. The enzyme catalyses L-histidine = trans-urocanate + NH4(+). The protein operates within amino-acid degradation; L-histidine degradation into L-glutamate; N-formimidoyl-L-glutamate from L-histidine: step 1/3. The polypeptide is Histidine ammonia-lyase (Cereibacter sphaeroides (strain ATCC 17029 / ATH 2.4.9) (Rhodobacter sphaeroides)).